A 219-amino-acid chain; its full sequence is MYSLLFIILMCIPFSFQTVYDDKSVCDSDNKEYMGIEVYVEATLDEPLRQTTCESEIHKYGASVSNGGLNISVDLLNCFLNFHTVGVYTNRDTVYAKFASLDPWTTEPINSMTHDDLVKLTEECIVDIYLKCEVDKTKDFMKTNGNRLKPRDFKTVPPSDVGSMIELQSDYCVNDVTAYVKIYDECGNIKQHSIPTLRDYFTTKNGQPRKILKKKFDNC.

Positions 1 to 16 are cleaved as a signal peptide; the sequence is MYSLLFIILMCIPFSF. The N-linked (GlcNAc...) asparagine; by host glycan is linked to asparagine 70.

The protein belongs to the orthopoxvirus OPG170 family.

The protein localises to the secreted. Its function is as follows. May interact with several cellular chemokines to interfere with chemokine-glycosaminoglycan (GAG) interactions at the cell surface to alter chemotaxis of nearby responsive cells. The polypeptide is Protein OPG170 (OPG170) (Vaccinia virus (strain Copenhagen) (VACV)).